We begin with the raw amino-acid sequence, 326 residues long: Biotin synthase (326 aa).

Residues 50–279 enclose the Radical SAM core domain; it reads FNGEKVDVEQ…ESVIKISGGR (230 aa). [4Fe-4S] cluster contacts are provided by cysteine 68, cysteine 72, and cysteine 75. Residues cysteine 112, cysteine 145, cysteine 204, and lysine 274 each contribute to the [2Fe-2S] cluster site.

The protein belongs to the radical SAM superfamily. Biotin synthase family. In terms of assembly, homodimer. [4Fe-4S] cluster is required as a cofactor. The cofactor is [2Fe-2S] cluster.

The enzyme catalyses (4R,5S)-dethiobiotin + (sulfur carrier)-SH + 2 reduced [2Fe-2S]-[ferredoxin] + 2 S-adenosyl-L-methionine = (sulfur carrier)-H + biotin + 2 5'-deoxyadenosine + 2 L-methionine + 2 oxidized [2Fe-2S]-[ferredoxin]. It functions in the pathway cofactor biosynthesis; biotin biosynthesis; biotin from 7,8-diaminononanoate: step 2/2. Catalyzes the conversion of dethiobiotin (DTB) to biotin by the insertion of a sulfur atom into dethiobiotin via a radical-based mechanism. The polypeptide is Biotin synthase (Nitrosopumilus maritimus (strain SCM1)).